The chain runs to 302 residues: Sulfate adenylyltransferase subunit 2 (302 aa).

Residues 280–302 form a disordered region; the sequence is RQGRLIDSDQSASMEQKKRQGYF.

It belongs to the PAPS reductase family. CysD subfamily. As to quaternary structure, heterodimer composed of CysD, the smaller subunit, and CysN.

It carries out the reaction sulfate + ATP + H(+) = adenosine 5'-phosphosulfate + diphosphate. It participates in sulfur metabolism; hydrogen sulfide biosynthesis; sulfite from sulfate: step 1/3. Its function is as follows. With CysN forms the ATP sulfurylase (ATPS) that catalyzes the adenylation of sulfate producing adenosine 5'-phosphosulfate (APS) and diphosphate, the first enzymatic step in sulfur assimilation pathway. APS synthesis involves the formation of a high-energy phosphoric-sulfuric acid anhydride bond driven by GTP hydrolysis by CysN coupled to ATP hydrolysis by CysD. This Shewanella putrefaciens (strain CN-32 / ATCC BAA-453) protein is Sulfate adenylyltransferase subunit 2.